The chain runs to 195 residues: MKQKIVLATGNKGKVKEMADVLSDFGFEVIAQTDLGIESPEETGLTFVENALLKARYASEKSGLPAIADDSGLVVSALNGAPGLYSARYAGEEGNDAKNREKLLAELAHIAQEQRQAKFVSCIVFLQHPTDPSPIIAEGECCGVIGFEEKGENGFGYDSLFFSPEQGCTFAELETAEKKKISHRAKALSVLKSKL.

Position 9-14 (9-14) interacts with substrate; the sequence is TGNKGK. Glu41 and Asp70 together coordinate Mg(2+). Asp70 serves as the catalytic Proton acceptor. Substrate contacts are provided by residues Ser71, 155 to 158, Lys178, and 183 to 184; these read FGYD and HR.

It belongs to the HAM1 NTPase family. In terms of assembly, homodimer. It depends on Mg(2+) as a cofactor.

The enzyme catalyses XTP + H2O = XMP + diphosphate + H(+). The catalysed reaction is dITP + H2O = dIMP + diphosphate + H(+). It catalyses the reaction ITP + H2O = IMP + diphosphate + H(+). Its function is as follows. Pyrophosphatase that catalyzes the hydrolysis of nucleoside triphosphates to their monophosphate derivatives, with a high preference for the non-canonical purine nucleotides XTP (xanthosine triphosphate), dITP (deoxyinosine triphosphate) and ITP. Seems to function as a house-cleaning enzyme that removes non-canonical purine nucleotides from the nucleotide pool, thus preventing their incorporation into DNA/RNA and avoiding chromosomal lesions. The protein is dITP/XTP pyrophosphatase of Haemophilus influenzae (strain ATCC 51907 / DSM 11121 / KW20 / Rd).